We begin with the raw amino-acid sequence, 631 residues long: Nucleoside triphosphatase I (631 aa).

The 163-residue stretch at phenylalanine 42–glycine 204 folds into the Helicase ATP-binding domain. An ATP-binding site is contributed by histidine 55–threonine 62. The DEXH box signature appears at aspartate 141–histidine 144. Residues lysine 367–lysine 532 enclose the Helicase C-terminal domain. The binding to the cap-specific mRNA (nucleoside-2'-O-)-methyltransferase stretch occupies residues aspartate 457–phenylalanine 524.

This sequence belongs to the helicase family. NPH I subfamily. In terms of assembly, monomer. Interacts (via C-terminus) with RAP94/OPG109 (via N-terminus). Interacts with the cap-specific mRNA (nucleoside-2'-O-)-methyltransferase OPG102.

It localises to the virion. It carries out the reaction a ribonucleoside 5'-triphosphate + H2O = a ribonucleoside 5'-diphosphate + phosphate + H(+). Functionally, DNA-dependent ATPase that acts as a 5' to 3' translocase on single-stranded DNA and thereby plays a role in transcription termination of viral early genes. Uses forward translocation in concert with the viral RNA polymerase RAP94/OPG109 subunit and the capping enzyme/VTF to catalyze release of UUUUUNU-containing nascent RNA from the elongation complex. In addition, acts as a positive elongation factor to assist transcription through problematic sequences. This Vaccinia virus (strain Copenhagen) (VACV) protein is Nucleoside triphosphatase I (OPG123).